Consider the following 226-residue polypeptide: Acyl-homoserine-lactone synthase (226 aa).

This sequence belongs to the autoinducer synthase family.

The enzyme catalyses a fatty acyl-[ACP] + S-adenosyl-L-methionine = an N-acyl-L-homoserine lactone + S-methyl-5'-thioadenosine + holo-[ACP] + H(+). Its function is as follows. Required for the synthesis of OHHL (N-(3-oxohexanoyl)-L-homoserine lactone), an autoinducer molecule. The sequence is that of Acyl-homoserine-lactone synthase (psyI) from Pseudomonas amygdali pv. tabaci (Pseudomonas syringae pv. tabaci).